We begin with the raw amino-acid sequence, 178 residues long: ATP synthase subunit b (178 aa).

Residues 19–39 traverse the membrane as a helical segment; sequence ITGIGFVILLFIAIKYIVPAF.

This sequence belongs to the ATPase B chain family. As to quaternary structure, F-type ATPases have 2 components, F(1) - the catalytic core - and F(0) - the membrane proton channel. F(1) has five subunits: alpha(3), beta(3), gamma(1), delta(1), epsilon(1). F(0) has three main subunits: a(1), b(2) and c(10-14). The alpha and beta chains form an alternating ring which encloses part of the gamma chain. F(1) is attached to F(0) by a central stalk formed by the gamma and epsilon chains, while a peripheral stalk is formed by the delta and b chains.

The protein localises to the cell membrane. Its function is as follows. F(1)F(0) ATP synthase produces ATP from ADP in the presence of a proton or sodium gradient. F-type ATPases consist of two structural domains, F(1) containing the extramembraneous catalytic core and F(0) containing the membrane proton channel, linked together by a central stalk and a peripheral stalk. During catalysis, ATP synthesis in the catalytic domain of F(1) is coupled via a rotary mechanism of the central stalk subunits to proton translocation. Functionally, component of the F(0) channel, it forms part of the peripheral stalk, linking F(1) to F(0). In Kocuria rhizophila (strain ATCC 9341 / DSM 348 / NBRC 103217 / DC2201), this protein is ATP synthase subunit b.